Consider the following 102-residue polypeptide: Inner membrane protein YaiY (102 aa).

Residues 1–24 (MADFTLSKSLFSGKYRNASSTPGN) are Cytoplasmic-facing. A helical transmembrane segment spans residues 25–45 (IAYALFVLFCFWAGAQLLNLL). The Periplasmic segment spans residues 46–74 (VHAPGVYERLMQVQETGRPRVEIGLGVGT). The chain crosses the membrane as a helical span at residues 75–95 (IFGLIPFLVGCLIFAVVALWL). Over 96–102 (HWRHRRQ) the chain is Cytoplasmic.

It is found in the cell inner membrane. In Escherichia coli O157:H7, this protein is Inner membrane protein YaiY (yaiY).